The sequence spans 236 residues: Alpha-acetolactate decarboxylase (236 aa).

It belongs to the alpha-acetolactate decarboxylase family.

It catalyses the reaction (2S)-2-acetolactate + H(+) = (R)-acetoin + CO2. It functions in the pathway polyol metabolism; (R,R)-butane-2,3-diol biosynthesis; (R,R)-butane-2,3-diol from pyruvate: step 2/3. In terms of biological role, converts acetolactate into acetoin. The sequence is that of Alpha-acetolactate decarboxylase (aldB) from Lactococcus lactis subsp. cremoris (strain MG1363).